The chain runs to 65 residues: Large ribosomal subunit protein bL35 (65 aa).

It belongs to the bacterial ribosomal protein bL35 family.

The sequence is that of Large ribosomal subunit protein bL35 from Agathobacter rectalis (strain ATCC 33656 / DSM 3377 / JCM 17463 / KCTC 5835 / VPI 0990) (Eubacterium rectale).